Consider the following 852-residue polypeptide: Leucine--tRNA ligase (852 aa).

A 'HIGH' region motif is present at residues 51–61 (PYPSGDLHMGH). The 'KMSKS' region signature appears at 615-619 (KMSKS). Lys618 contributes to the ATP binding site.

The protein belongs to the class-I aminoacyl-tRNA synthetase family.

The protein resides in the cytoplasm. The enzyme catalyses tRNA(Leu) + L-leucine + ATP = L-leucyl-tRNA(Leu) + AMP + diphosphate. This is Leucine--tRNA ligase from Clavibacter sepedonicus (Clavibacter michiganensis subsp. sepedonicus).